We begin with the raw amino-acid sequence, 142 residues long: ATP synthase epsilon chain (142 aa).

It belongs to the ATPase epsilon chain family. F-type ATPases have 2 components, CF(1) - the catalytic core - and CF(0) - the membrane proton channel. CF(1) has five subunits: alpha(3), beta(3), gamma(1), delta(1), epsilon(1). CF(0) has three main subunits: a, b and c.

The protein resides in the cell inner membrane. Its function is as follows. Produces ATP from ADP in the presence of a proton gradient across the membrane. This Shewanella denitrificans (strain OS217 / ATCC BAA-1090 / DSM 15013) protein is ATP synthase epsilon chain.